The primary structure comprises 213 residues: ATP synthase peripheral stalk subunit OSCP, mitochondrial (213 aa).

The N-terminal 23 residues, 1 to 23 (MATPAVSGLSRQVRCFSTSVVRP), are a transit peptide targeting the mitochondrion. The SIFI-degron motif lies at 5–23 (AVSGLSRQVRCFSTSVVRP). Residues K54, K60, K70, and K73 each carry the N6-acetyllysine modification. The residue at position 90 (K90) is an N6-succinyllysine. 2 positions are modified to N6-acetyllysine; alternate: K158 and K162. 2 positions are modified to N6-succinyllysine; alternate: K158 and K162. An N6-acetyllysine mark is found at K172, K176, and K192. N6-succinyllysine is present on K199.

This sequence belongs to the ATPase delta chain family. In terms of assembly, component of the ATP synthase complex composed at least of ATP5F1A/subunit alpha, ATP5F1B/subunit beta, ATP5MC1/subunit c (homooctomer), MT-ATP6/subunit a, MT-ATP8/subunit 8, ATP5ME/subunit e, ATP5MF/subunit f, ATP5MG/subunit g, ATP5MK/subunit k, ATP5MJ/subunit j, ATP5F1C/subunit gamma, ATP5F1D/subunit delta, ATP5F1E/subunit epsilon, ATP5PF/subunit F6, ATP5PB/subunit b, ATP5PD/subunit d, ATP5PO/subunit OSCP. ATP synthase complex consists of a soluble F(1) head domain (subunits alpha(3) and beta(3)) - the catalytic core - and a membrane F(0) domain - the membrane proton channel (subunits c, a, 8, e, f, g, k and j). These two domains are linked by a central stalk (subunits gamma, delta, and epsilon) rotating inside the F1 region and a stationary peripheral stalk (subunits F6, b, d, and OSCP). Post-translationally, acetylation at Lys-162 decreases ATP production. Deacetylated by SIRT3. In terms of processing, in response to mitochondrial stress, the precursor protein is ubiquitinated by the SIFI complex in the cytoplasm before mitochondrial import, leading to its degradation. Within the SIFI complex, UBR4 initiates ubiquitin chain that are further elongated or branched by KCMF1.

The protein localises to the mitochondrion. Its subcellular location is the mitochondrion inner membrane. Functionally, subunit OSCP, of the mitochondrial membrane ATP synthase complex (F(1)F(0) ATP synthase or Complex V) that produces ATP from ADP in the presence of a proton gradient across the membrane which is generated by electron transport complexes of the respiratory chain. ATP synthase complex consist of a soluble F(1) head domain - the catalytic core - and a membrane F(1) domain - the membrane proton channel. These two domains are linked by a central stalk rotating inside the F(1) region and a stationary peripheral stalk. During catalysis, ATP synthesis in the catalytic domain of F(1) is coupled via a rotary mechanism of the central stalk subunits to proton translocation. In vivo, can only synthesize ATP although its ATP hydrolase activity can be activated artificially in vitro. Part of the complex F(0) domain. Part of the complex F(0) domain and the peripheric stalk, which acts as a stator to hold the catalytic alpha(3)beta(3) subcomplex and subunit a/ATP6 static relative to the rotary elements. The polypeptide is ATP synthase peripheral stalk subunit OSCP, mitochondrial (Pongo abelii (Sumatran orangutan)).